A 358-amino-acid polypeptide reads, in one-letter code: Ornithine cyclodeaminase (358 aa).

Positions 52 and 76 each coordinate L-ornithine. NAD(+) contacts are provided by residues Thr91, Arg119, 146-147 (AQ), Asp168, Thr208, 231-234 (VGGD), Lys238, and Ser299. Arg119 provides a ligand contact to L-ornithine. L-ornithine is bound at residue Asp234. Asp234 functions as the Proton donor/acceptor in the catalytic mechanism. Val300 is an L-ornithine binding site.

This sequence belongs to the ornithine cyclodeaminase/mu-crystallin family. NAD(+) serves as cofactor.

The enzyme catalyses L-ornithine = L-proline + NH4(+). It functions in the pathway amino-acid biosynthesis; L-proline biosynthesis; L-proline from L-ornithine: step 1/1. Its function is as follows. Catalyzes the conversion of L-ornithine into L-proline with release of ammonia. This is Ornithine cyclodeaminase from Brucella suis biovar 1 (strain 1330).